Consider the following 369-residue polypeptide: Methionine import ATP-binding protein MetN 1 (369 aa).

The interval 1–26 is disordered; the sequence is MTTMTVPPSLLPLEPFPTAPDTRAST. The ABC transporter domain occupies 29-265; that stretch reads IRLHGLGKRY…PRHAVTRSLL (237 aa). Position 62-69 (62-69) interacts with ATP; that stretch reads GRSGAGKS.

The protein belongs to the ABC transporter superfamily. Methionine importer (TC 3.A.1.24) family. In terms of assembly, the complex is composed of two ATP-binding proteins (MetN), two transmembrane proteins (MetI) and a solute-binding protein (MetQ).

It is found in the cell inner membrane. The catalysed reaction is L-methionine(out) + ATP + H2O = L-methionine(in) + ADP + phosphate + H(+). The enzyme catalyses D-methionine(out) + ATP + H2O = D-methionine(in) + ADP + phosphate + H(+). In terms of biological role, part of the ABC transporter complex MetNIQ involved in methionine import. Responsible for energy coupling to the transport system. This chain is Methionine import ATP-binding protein MetN 1, found in Pseudomonas aeruginosa (strain UCBPP-PA14).